The sequence spans 140 residues: Large ribosomal subunit protein bL17 (140 aa).

Positions 121-140 (AAKGLDSGPTAEANDDDSEE) are disordered.

The protein belongs to the bacterial ribosomal protein bL17 family. As to quaternary structure, part of the 50S ribosomal subunit. Contacts protein L32.

This chain is Large ribosomal subunit protein bL17, found in Rhodospirillum rubrum (strain ATCC 11170 / ATH 1.1.1 / DSM 467 / LMG 4362 / NCIMB 8255 / S1).